A 508-amino-acid chain; its full sequence is Cobyric acid synthase (508 aa).

The 200-residue stretch at 255–454 (ELNIAVLKLP…LHGVFESGPW (200 aa)) folds into the GATase cobBQ-type domain. C336 functions as the Nucleophile in the catalytic mechanism. The active site involves H446.

It belongs to the CobB/CobQ family. CobQ subfamily.

It functions in the pathway cofactor biosynthesis; adenosylcobalamin biosynthesis. Its function is as follows. Catalyzes amidations at positions B, D, E, and G on adenosylcobyrinic A,C-diamide. NH(2) groups are provided by glutamine, and one molecule of ATP is hydrogenolyzed for each amidation. The protein is Cobyric acid synthase of Synechococcus sp. (strain CC9311).